A 159-amino-acid chain; its full sequence is ATP synthase subunit b (159 aa).

Residues threonine 7–phenylalanine 27 traverse the membrane as a helical segment.

Belongs to the ATPase B chain family. F-type ATPases have 2 components, F(1) - the catalytic core - and F(0) - the membrane proton channel. F(1) has five subunits: alpha(3), beta(3), gamma(1), delta(1), epsilon(1). F(0) has three main subunits: a(1), b(2) and c(10-14). The alpha and beta chains form an alternating ring which encloses part of the gamma chain. F(1) is attached to F(0) by a central stalk formed by the gamma and epsilon chains, while a peripheral stalk is formed by the delta and b chains.

The protein resides in the cell membrane. F(1)F(0) ATP synthase produces ATP from ADP in the presence of a proton or sodium gradient. F-type ATPases consist of two structural domains, F(1) containing the extramembraneous catalytic core and F(0) containing the membrane proton channel, linked together by a central stalk and a peripheral stalk. During catalysis, ATP synthesis in the catalytic domain of F(1) is coupled via a rotary mechanism of the central stalk subunits to proton translocation. In terms of biological role, component of the F(0) channel, it forms part of the peripheral stalk, linking F(1) to F(0). The protein is ATP synthase subunit b of Clostridium novyi (strain NT).